The following is a 139-amino-acid chain: Putative nickel-responsive regulator (139 aa).

Histidine 79, histidine 90, histidine 92, and cysteine 98 together coordinate Ni(2+).

This sequence belongs to the transcriptional regulatory CopG/NikR family. Requires Ni(2+) as cofactor.

In terms of biological role, transcriptional regulator. In Geobacter sp. (strain M21), this protein is Putative nickel-responsive regulator.